The following is a 482-amino-acid chain: ATP synthase subunit beta (482 aa).

162-169 (GGAGVGKT) is a binding site for ATP.

It belongs to the ATPase alpha/beta chains family. As to quaternary structure, F-type ATPases have 2 components, CF(1) - the catalytic core - and CF(0) - the membrane proton channel. CF(1) has five subunits: alpha(3), beta(3), gamma(1), delta(1), epsilon(1). CF(0) has four main subunits: a(1), b(1), b'(1) and c(9-12).

It is found in the cellular thylakoid membrane. It catalyses the reaction ATP + H2O + 4 H(+)(in) = ADP + phosphate + 5 H(+)(out). Its function is as follows. Produces ATP from ADP in the presence of a proton gradient across the membrane. The catalytic sites are hosted primarily by the beta subunits. The protein is ATP synthase subunit beta of Trichormus variabilis (strain ATCC 29413 / PCC 7937) (Anabaena variabilis).